Reading from the N-terminus, the 683-residue chain is uncharacterized protein (683 aa).

Polar residues-rich tracts occupy residues 407–420 (FETS…TYTP) and 512–529 (EGSS…SSEA). 3 disordered regions span residues 407 to 427 (FETS…KLST), 509 to 556 (FSRE…SSTV), and 621 to 648 (HNTS…DHPD). Residues 531–542 (LPPLLTTTPTPT) show a composition bias toward low complexity. Composition is skewed to polar residues over residues 543-556 (NTEK…SSTV) and 621-630 (HNTSMPNPHH). Residues 633–648 (VKPEDHPHHPEGDHPD) show a composition bias toward basic and acidic residues. The chain crosses the membrane as a helical span at residues 657–677 (IWLLPIAGTIFALVALVIVNI).

The protein localises to the host membrane. This is an uncharacterized protein from Alcelaphine herpesvirus 1 (strain C500) (AlHV-1).